The primary structure comprises 328 residues: Carbonic anhydrase-related protein 10 (328 aa).

Residues 31–301 enclose the Alpha-carbonic anhydrase domain; it reads GWWAYKEVVQ…LNNRCIRTNI (271 aa).

The protein belongs to the alpha-carbonic anhydrase family.

Functionally, does not have a catalytic activity. This chain is Carbonic anhydrase-related protein 10 (CA10), found in Macaca fascicularis (Crab-eating macaque).